Here is a 451-residue protein sequence, read N- to C-terminus: Phosphoglucosamine mutase (451 aa).

The active-site Phosphoserine intermediate is the Ser-102. Positions 102, 243, 245, and 247 each coordinate Mg(2+). The residue at position 102 (Ser-102) is a Phosphoserine.

It belongs to the phosphohexose mutase family. Mg(2+) serves as cofactor. In terms of processing, activated by phosphorylation.

The catalysed reaction is alpha-D-glucosamine 1-phosphate = D-glucosamine 6-phosphate. Its function is as follows. Catalyzes the conversion of glucosamine-6-phosphate to glucosamine-1-phosphate. This is Phosphoglucosamine mutase from Chelativorans sp. (strain BNC1).